A 302-amino-acid polypeptide reads, in one-letter code: Glycine--tRNA ligase alpha subunit (302 aa).

The protein belongs to the class-II aminoacyl-tRNA synthetase family. Tetramer of two alpha and two beta subunits.

It is found in the cytoplasm. The catalysed reaction is tRNA(Gly) + glycine + ATP = glycyl-tRNA(Gly) + AMP + diphosphate. The polypeptide is Glycine--tRNA ligase alpha subunit (Xanthomonas euvesicatoria pv. vesicatoria (strain 85-10) (Xanthomonas campestris pv. vesicatoria)).